Consider the following 86-residue polypeptide: Small ribosomal subunit protein bS18 (86 aa).

Belongs to the bacterial ribosomal protein bS18 family. As to quaternary structure, part of the 30S ribosomal subunit. Forms a tight heterodimer with protein bS6.

Functionally, binds as a heterodimer with protein bS6 to the central domain of the 16S rRNA, where it helps stabilize the platform of the 30S subunit. The polypeptide is Small ribosomal subunit protein bS18 (Herpetosiphon aurantiacus (strain ATCC 23779 / DSM 785 / 114-95)).